Consider the following 250-residue polypeptide: tRNA pseudouridine synthase A (250 aa).

The Nucleophile role is filled by D53. Substrate is bound at residue Y111.

It belongs to the tRNA pseudouridine synthase TruA family. Homodimer.

The enzyme catalyses uridine(38/39/40) in tRNA = pseudouridine(38/39/40) in tRNA. In terms of biological role, formation of pseudouridine at positions 38, 39 and 40 in the anticodon stem and loop of transfer RNAs. The polypeptide is tRNA pseudouridine synthase A (Streptococcus uberis (strain ATCC BAA-854 / 0140J)).